The primary structure comprises 282 residues: Stress response regulator protein 1 (282 aa).

2 stretches are compositionally biased toward low complexity: residues 12 to 30 and 41 to 58; these read NLSR…HSST and SLDT…SNNN. 3 disordered regions span residues 12-31, 41-84, and 112-139; these read NLSR…SSTV, SLDT…DDED, and LTPF…TTVV. Positions 66–77 are enriched in polar residues; the sequence is SDYNSYTHNQYY. Residues 125–139 show a composition bias toward low complexity; sequence SIISSKSSNKSTTVV. The Response regulatory domain maps to 155-273; sequence SFLIVDDNII…LDFMANSIDD (119 aa). Residue aspartate 206 is modified to 4-aspartylphosphate.

Required for stress adaptation, morphogenesis and virulence. The sequence is that of Stress response regulator protein 1 (SRR1) from Candida albicans (strain WO-1) (Yeast).